A 434-amino-acid chain; its full sequence is Serine hydroxymethyltransferase (434 aa).

(6S)-5,6,7,8-tetrahydrofolate is bound by residues Leu133 and 137–139 (GHL). Residue Lys242 is modified to N6-(pyridoxal phosphate)lysine.

The protein belongs to the SHMT family. Homodimer. The cofactor is pyridoxal 5'-phosphate.

Its subcellular location is the cytoplasm. It carries out the reaction (6R)-5,10-methylene-5,6,7,8-tetrahydrofolate + glycine + H2O = (6S)-5,6,7,8-tetrahydrofolate + L-serine. The protein operates within one-carbon metabolism; tetrahydrofolate interconversion. Its pathway is amino-acid biosynthesis; glycine biosynthesis; glycine from L-serine: step 1/1. In terms of biological role, catalyzes the reversible interconversion of serine and glycine with tetrahydrofolate (THF) serving as the one-carbon carrier. This reaction serves as the major source of one-carbon groups required for the biosynthesis of purines, thymidylate, methionine, and other important biomolecules. Also exhibits THF-independent aldolase activity toward beta-hydroxyamino acids, producing glycine and aldehydes, via a retro-aldol mechanism. The chain is Serine hydroxymethyltransferase from Bradyrhizobium sp. (strain BTAi1 / ATCC BAA-1182).